Reading from the N-terminus, the 242-residue chain is Orotidine 5'-phosphate decarboxylase (242 aa).

Substrate-binding positions include aspartate 16, lysine 37, 64–73, threonine 128, arginine 190, glutamine 199, glycine 219, and arginine 220; that span reads DLKFHDIPNT. The Proton donor role is filled by lysine 66.

It belongs to the OMP decarboxylase family. Type 1 subfamily. As to quaternary structure, homodimer.

It catalyses the reaction orotidine 5'-phosphate + H(+) = UMP + CO2. The protein operates within pyrimidine metabolism; UMP biosynthesis via de novo pathway; UMP from orotate: step 2/2. Catalyzes the decarboxylation of orotidine 5'-monophosphate (OMP) to uridine 5'-monophosphate (UMP). The protein is Orotidine 5'-phosphate decarboxylase of Prochlorococcus marinus (strain MIT 9312).